Consider the following 209-residue polypeptide: Uracil phosphoribosyltransferase (209 aa).

5-phospho-alpha-D-ribose 1-diphosphate-binding positions include arginine 79, arginine 104, and 131 to 139 (DPMLATGGT). Residues isoleucine 194 and 199-201 (GDA) contribute to the uracil site. Aspartate 200 lines the 5-phospho-alpha-D-ribose 1-diphosphate pocket.

Belongs to the UPRTase family. Mg(2+) serves as cofactor.

It catalyses the reaction UMP + diphosphate = 5-phospho-alpha-D-ribose 1-diphosphate + uracil. The protein operates within pyrimidine metabolism; UMP biosynthesis via salvage pathway; UMP from uracil: step 1/1. Allosterically activated by GTP. Functionally, catalyzes the conversion of uracil and 5-phospho-alpha-D-ribose 1-diphosphate (PRPP) to UMP and diphosphate. This chain is Uracil phosphoribosyltransferase, found in Pseudoalteromonas translucida (strain TAC 125).